The chain runs to 552 residues: ATP synthase subunit alpha, mitochondrial (552 aa).

The transit peptide at 1 to 47 (MSIFSARLASSVARNLPKAANQVACKAAYPAASLAARKLHVASTQRS) directs the protein to the mitochondrion. Residue 211-218 (GDRQTGKT) participates in ATP binding.

The protein belongs to the ATPase alpha/beta chains family. F-type ATPases have 2 components, CF(1) - the catalytic core - and CF(0) - the membrane proton channel. CF(1) has five subunits: alpha(3), beta(3), gamma(1), delta(1), epsilon(1). CF(0) has three main subunits: a, b and c.

Its subcellular location is the mitochondrion inner membrane. In terms of biological role, mitochondrial membrane ATP synthase (F(1)F(0) ATP synthase or Complex V) produces ATP from ADP in the presence of a proton gradient across the membrane which is generated by electron transport complexes of the respiratory chain. F-type ATPases consist of two structural domains, F(1) - containing the extramembraneous catalytic core, and F(0) - containing the membrane proton channel, linked together by a central stalk and a peripheral stalk. During catalysis, ATP synthesis in the catalytic domain of F(1) is coupled via a rotary mechanism of the central stalk subunits to proton translocation. Subunits alpha and beta form the catalytic core in F(1). Rotation of the central stalk against the surrounding alpha(3)beta(3) subunits leads to hydrolysis of ATP in three separate catalytic sites on the beta subunits. Subunit alpha does not bear the catalytic high-affinity ATP-binding sites. The sequence is that of ATP synthase subunit alpha, mitochondrial (blw) from Drosophila melanogaster (Fruit fly).